The chain runs to 511 residues: LEM domain-containing protein 2 (511 aa).

N-acetylalanine is present on A2. An LEM domain is found at 2-42 (AGLSDLELRRELQALGFQPGPITDTTRNVYRNKLRRLRGEA). 2 disordered regions span residues 18–110 (FQPG…SDAS) and 128–206 (GLSY…AGRT). Residues 38 to 80 (LRGEARLRDDERLREDAGPREDAGPRGPERQREEARLREEAPL) show a composition bias toward basic and acidic residues. Residues 80 to 112 (LRARPAASVLRSEPWPLSPSPPAPSAASDASGP) are interaction with lamin A/C complexes. The segment at 80 to 141 (LRARPAASVL…PPHAGPGPLR (62 aa)) is required for nuclear retention and interaction with LMNA isoform C. 2 stretches are compositionally biased toward low complexity: residues 81–94 (RARP…SEPW) and 172–183 (APPSASARPHSA). The next 2 helical transmembrane spans lie at 221–241 (LLLW…WVKM) and 385–405 (VTHV…LILL). Positions 403-511 (ILLKYRWRKL…KPSSFSDSER (109 aa)) are winged-Helix (WH). Phosphoserine occurs at positions 505, 507, and 509.

In terms of assembly, interacts (via N-terminus) with LMNA isoform C (via C-terminus) (in vitro). Interacts (via LEM domain) with BANF1. Interacts (via C-terminus) with CHMP7. Interacts (via N-terminus) with tubulin; the interaction causes microtubule bundling and stabilization (in vitro). Post-translationally, phosphorylated; strongly phosphorylated in mitosis compared to G1/S. In terms of tissue distribution, ubiquitously expressed, including liver, brain, heart, skeletal muscle, lung, testis, spleen, kidney and white adipose tissue.

The protein localises to the nucleus inner membrane. It localises to the nucleus envelope. The protein resides in the cytoplasm. It is found in the cytoskeleton. Its subcellular location is the spindle. Functionally, nuclear lamina-associated inner nuclear membrane protein that is involved in nuclear structure organization and maintenance of nuclear envelope (NE) integrity and NE reformation after mitosis. Plays a role as transmembrane adapter for the endosomal sorting complexes required for transport (ESCRT), and is thereby involved in ESCRT-mediated NE reformation. Promotes ESCRT-mediated NE closure by recruiting CHMP7 and downstream ESCRT-III proteins IST1/CHMP8 and CHMP2A to the reforming NE during anaphase. During nuclear reassembly, condenses into a liquid-like coating around microtubule spindles and coassembles with CHMP7 to form a macromolecular O-ring seal at the confluence between membranes, chromatin, and the spindle to facilitate early nuclear sealing. Plays a role in the organization of heterochromatin associated with the NE and in the maintenance of NE organization under mechanical stress. Required for embryonic development and is involved in regulation of several signaling pathways such as MAPK and AKT. Required for myoblast differentiation involving regulation of ERK signaling. Essential for cardiac homeostasis and proper heart function. This chain is LEM domain-containing protein 2 (Lemd2), found in Mus musculus (Mouse).